The following is a 235-amino-acid chain: Purine nucleoside phosphorylase DeoD-type (235 aa).

His4 is an a purine D-ribonucleoside binding site. Phosphate contacts are provided by residues Gly20, Arg24, Arg43, and 87-90 (RVGT). Residues 179–181 (EME) and 203–204 (SD) each bind a purine D-ribonucleoside. Catalysis depends on Asp204, which acts as the Proton donor.

This sequence belongs to the PNP/UDP phosphorylase family. Homohexamer; trimer of homodimers.

It catalyses the reaction a purine D-ribonucleoside + phosphate = a purine nucleobase + alpha-D-ribose 1-phosphate. It carries out the reaction a purine 2'-deoxy-D-ribonucleoside + phosphate = a purine nucleobase + 2-deoxy-alpha-D-ribose 1-phosphate. In terms of biological role, catalyzes the reversible phosphorolytic breakdown of the N-glycosidic bond in the beta-(deoxy)ribonucleoside molecules, with the formation of the corresponding free purine bases and pentose-1-phosphate. This chain is Purine nucleoside phosphorylase DeoD-type, found in Clostridium perfringens (strain ATCC 13124 / DSM 756 / JCM 1290 / NCIMB 6125 / NCTC 8237 / Type A).